We begin with the raw amino-acid sequence, 368 residues long: Putative J domain-containing protein R445 (368 aa).

A J domain is found at 13–83; it reads DLYKILGLTN…KQRNEYNQRL (71 aa).

The sequence is that of Putative J domain-containing protein R445 from Acanthamoeba polyphaga mimivirus (APMV).